The chain runs to 871 residues: Rho guanine nucleotide exchange factor 26 (871 aa).

3 disordered regions span residues 1 to 49, 86 to 233, and 288 to 310; these read MDGE…LLIT, AQRR…NPSV, and PLGH…SLRR. Residue serine 22 is modified to Phosphoserine. Residues 136-156 are compositionally biased toward pro residues; the sequence is PAPPPPPVLRPPRTPNAPAPC. Residues 173-192 are compositionally biased toward polar residues; sequence PTANGLAANNDSPGSGSQSG. Position 392 is a phosphoserine (serine 392). In terms of domain architecture, DH spans 439-623; sequence KRQEAIFEVI…SKLVRLCNEG (185 aa). The PH domain occupies 655–782; sequence WLVKRGELTA…WITALGHSSG (128 aa). In terms of domain architecture, SH3 spans 789–850; it reads TSLTQVEIVR…PMECAKEITC (62 aa).

In terms of assembly, interacts with ICAM1 and RHOG. Isoform 1 is broadly expressed, with highest levels in liver (at protein level). Certain mRNA species appear to be specifically expressed in prostate and liver.

It is found in the cell projection. The protein resides in the ruffle. In terms of biological role, activates RhoG GTPase by promoting the exchange of GDP by GTP. Required for the formation of membrane ruffles during macropinocytosis. Required for the formation of cup-like structures during trans-endothelial migration of leukocytes. In case of Salmonella enterica infection, activated by SopB, which induces cytoskeleton rearrangements and promotes bacterial entry. This chain is Rho guanine nucleotide exchange factor 26 (ARHGEF26), found in Homo sapiens (Human).